Consider the following 221-residue polypeptide: Endonuclease V (221 aa).

Mg(2+) contacts are provided by Asp44 and Asp112.

It belongs to the endonuclease V family. Requires Mg(2+) as cofactor.

The protein resides in the cytoplasm. The catalysed reaction is Endonucleolytic cleavage at apurinic or apyrimidinic sites to products with a 5'-phosphate.. DNA repair enzyme involved in the repair of deaminated bases. Selectively cleaves double-stranded DNA at the second phosphodiester bond 3' to a deoxyinosine leaving behind the intact lesion on the nicked DNA. This chain is Endonuclease V, found in Trichormus variabilis (strain ATCC 29413 / PCC 7937) (Anabaena variabilis).